We begin with the raw amino-acid sequence, 172 residues long: Endoribonuclease YbeY (172 aa).

Zn(2+) is bound by residues H124, H128, and H134.

The protein belongs to the endoribonuclease YbeY family. Zn(2+) is required as a cofactor.

It localises to the cytoplasm. Single strand-specific metallo-endoribonuclease involved in late-stage 70S ribosome quality control and in maturation of the 3' terminus of the 16S rRNA. The protein is Endoribonuclease YbeY of Rhodopseudomonas palustris (strain BisA53).